A 159-amino-acid chain; its full sequence is MNQNTTGITNYNKAINPQQFDKVVEAILAGKYSWACVLMLRFAGYNPMHYIPYRTYNRLLKENSEASKVQQQQHDNLKNSQVAAVSRSNTNMPSSCLSKIKDLAYLEVVGKQTTEIHGGNLDQWLTEQVHEFQDMYLEPQAISNQDITFKLSDLDFIHN.

Positions 1–50 (MNQNTTGITNYNKAINPQQFDKVVEAILAGKYSWACVLMLRFAGYNPMHY) are required to complement a hetP deletion.

This sequence belongs to the HetP family. In bacterial two-hybrid assays interacts weakly with Asl1930, Alr2902 and Alr3234.

Functionally, promotes heterocyst differentiation and commitment when nitrogen is limiting. Interplay between the 4 HetP paralogs controls the timing of commitment to heterocyst formation and its duration. Epistatic analysis show that the 3 paralogs act upstream of hetP to delay commitment (asl1930, alr3234) or inhibit development (alr2902). Asl1930 and Alr3234 must also attenuate the activity of Alr2902. Required for heterocyst formation. Functions directly downstream of master regulator HetR to promote heterocyst differentiation, functioning downstream of patterning (cell choice). Partially functionally redundant with homologs alr2902 and asl1930 but not alr3234. Overexpression leads to more than wild-type levels of heterocysts. Overexpression in the absence of hetR partially bypasses hetR deletion, allowing differentiation of heterocysts, although they only fix nitrogen in the absence of oxygen (a Fox- Fix+ phenotype), suggesting they are not fully. The protein is Heterocyst differentiation protein HetP of Nostoc sp. (strain PCC 7120 / SAG 25.82 / UTEX 2576).